A 538-amino-acid polypeptide reads, in one-letter code: Eukaryotic translation initiation factor 3 subunit L (538 aa).

A PCI domain is found at 305–513; the sequence is TFSDILLYIQ…IHIADTKVSH (209 aa).

Belongs to the eIF-3 subunit L family. Component of the eukaryotic translation initiation factor 3 (eIF-3) complex. The eIF-3 complex interacts with pix.

It is found in the cytoplasm. Component of the eukaryotic translation initiation factor 3 (eIF-3) complex, which is involved in protein synthesis of a specialized repertoire of mRNAs and, together with other initiation factors, stimulates binding of mRNA and methionyl-tRNAi to the 40S ribosome. The eIF-3 complex specifically targets and initiates translation of a subset of mRNAs involved in cell proliferation. In Drosophila mojavensis (Fruit fly), this protein is Eukaryotic translation initiation factor 3 subunit L.